Reading from the N-terminus, the 323-residue chain is tRNA U34 carboxymethyltransferase (323 aa).

Carboxy-S-adenosyl-L-methionine contacts are provided by residues lysine 91, tryptophan 105, lysine 110, glycine 130, aspartate 152–threonine 154, isoleucine 181–glutamate 182, methionine 196, tyrosine 200, and arginine 315.

This sequence belongs to the class I-like SAM-binding methyltransferase superfamily. CmoB family. Homotetramer.

The enzyme catalyses carboxy-S-adenosyl-L-methionine + 5-hydroxyuridine(34) in tRNA = 5-carboxymethoxyuridine(34) in tRNA + S-adenosyl-L-homocysteine + H(+). Catalyzes carboxymethyl transfer from carboxy-S-adenosyl-L-methionine (Cx-SAM) to 5-hydroxyuridine (ho5U) to form 5-carboxymethoxyuridine (cmo5U) at position 34 in tRNAs. This Salmonella typhi protein is tRNA U34 carboxymethyltransferase.